The sequence spans 179 residues: UPF0303 protein YBR137W (179 aa).

It belongs to the UPF0303 family.

The protein localises to the cytoplasm. The chain is UPF0303 protein YBR137W from Saccharomyces cerevisiae (strain ATCC 204508 / S288c) (Baker's yeast).